A 501-amino-acid chain; its full sequence is Melianol synthase CYP71BQ5 (501 aa).

Residues 1 to 21 traverse the membrane as a helical segment; sequence MEFRLPVLLSFLLFFLMLVRH. Position 439 (C439) interacts with heme.

It belongs to the cytochrome P450 family. The cofactor is heme. As to expression, mainly expressed in petioles and roots, and, to a lower extent, in leaves.

It is found in the membrane. It carries out the reaction dihydroniloticin + 2 reduced [NADPH--hemoprotein reductase] + 2 O2 = melianol + 2 oxidized [NADPH--hemoprotein reductase] + 3 H2O + 2 H(+). Its pathway is secondary metabolite biosynthesis; terpenoid biosynthesis. In terms of biological role, monooxygenase involved in the biosynthesis of limonoids triterpene natural products such as azadirachtin, an antifeedant widely used as bioinsecticide, and possessing many medicinal applications including anti-tumoral, anti-malarial, anti-rheumatic, antibacterial, anti-inflammatory, anti-pyretic and diuretic effects. Catalyzes the conversion of dihydroniloticin to the protolimonoid melianol. This Melia azedarach (Chinaberry tree) protein is Melianol synthase CYP71BQ5.